The sequence spans 404 residues: N-acetylglucosamine-6-phosphate deacetylase (404 aa).

Position 143 (glutamate 143) interacts with a divalent metal cation. Residue 154–155 (AH) participates in substrate binding. A divalent metal cation contacts are provided by histidine 211 and histidine 232. Residues 235 to 236 (NA), arginine 243, and 269 to 272 (DGIH) contribute to the substrate site. Aspartate 294 functions as the Proton donor/acceptor in the catalytic mechanism. Substrate is bound at residue 328–330 (LSG).

Belongs to the metallo-dependent hydrolases superfamily. NagA family. A divalent metal cation is required as a cofactor.

It catalyses the reaction N-acetyl-D-glucosamine 6-phosphate + H2O = D-glucosamine 6-phosphate + acetate. It participates in amino-sugar metabolism; N-acetylneuraminate degradation. In terms of biological role, hydrolyzes the N-glycolyl group from N-glycolylglucosamine 6-phosphate (GlcNGc-6-P) in the N-glycolylneuraminic acid (Neu5Gc) degradation pathway. The sequence is that of N-acetylglucosamine-6-phosphate deacetylase (amdhd2) from Danio rerio (Zebrafish).